The chain runs to 104 residues: Flagellar hook-basal body complex protein FliE (104 aa).

The protein belongs to the FliE family.

It is found in the bacterial flagellum basal body. The sequence is that of Flagellar hook-basal body complex protein FliE from Escherichia coli O6:K15:H31 (strain 536 / UPEC).